The primary structure comprises 74 residues: Protein krueppel (74 aa).

4 consecutive C2H2-type zinc fingers follow at residues 1–4, 10–32, 38–60, and 66–74; these read ERTH, FECQ…MRLH, YRCE…LRVH, and YGCEHCSMK.

The protein belongs to the krueppel C2H2-type zinc-finger protein family.

It is found in the nucleus. Krueppel is a gap class segmentation protein. This chain is Protein krueppel (Kr), found in Tribolium castaneum (Red flour beetle).